Reading from the N-terminus, the 199-residue chain is uncharacterized protein (199 aa).

Helical transmembrane passes span 41 to 61 (LFIP…AFIC), 72 to 92 (SLIC…CSPW), 109 to 129 (TVWV…SIFV), and 145 to 165 (VTYS…LLNL).

To M.pneumoniae MPN_037.

It is found in the cell membrane. This is an uncharacterized protein from Mycoplasma pneumoniae (strain ATCC 29342 / M129 / Subtype 1) (Mycoplasmoides pneumoniae).